Here is a 198-residue protein sequence, read N- to C-terminus: Nuclear transcription factor Y subunit A-4 (198 aa).

A disordered region spans residues 1 to 47 (MTSSVHELSDNNESHAKKERPDSQTRPQVPSGRSSESIDTNSVYSEP). Basic and acidic residues predominate over residues 7–23 (ELSDNNESHAKKERPDS). Over residues 24–44 (QTRPQVPSGRSSESIDTNSVY) the composition is skewed to polar residues. A Subunit association domain (SAD) motif is present at residues 101–124 (FVNAKQYHGILRRRQSRAKLEARN). Residues 131 to 156 (KPYMHESRHLHAIRRPRGCGGRFLNA) constitute a DNA-binding region (NFYA/HAP2-type). Residues 136-198 (ESRHLHAIRR…MATSGPNGRS (63 aa)) form a disordered region. The span at 156–166 (AKKENGDHKEE) shows a compositional bias: basic and acidic residues.

It belongs to the NFYA/HAP2 subunit family. In terms of assembly, heterotrimeric transcription factor composed of three components, NF-YA, NF-YB and NF-YC. NF-YB and NF-YC must interact and dimerize for NF-YA association and DNA binding. As to expression, expressed in stems, caulines, and senescent flowers.

It localises to the nucleus. Stimulates the transcription of various genes by recognizing and binding to a CCAAT motif in promoters. This chain is Nuclear transcription factor Y subunit A-4 (NFYA4), found in Arabidopsis thaliana (Mouse-ear cress).